We begin with the raw amino-acid sequence, 87 residues long: RNA-binding protein Hfq (87 aa).

Residues 9-68 (DPFLNALRRERIPVSIFLVNGIKLQGKIQSFDQFVILLENTVNQMVYKHAISTVVPARAV) enclose the Sm domain.

The protein belongs to the Hfq family. As to quaternary structure, homohexamer.

In terms of biological role, RNA chaperone that binds small regulatory RNA (sRNAs) and mRNAs to facilitate mRNA translational regulation in response to envelope stress, environmental stress and changes in metabolite concentrations. Also binds with high specificity to tRNAs. The sequence is that of RNA-binding protein Hfq from Pseudoalteromonas translucida (strain TAC 125).